The sequence spans 29 residues: GLWSKIKTAGKSVAKAAAKAAVKAVTNAV.

This sequence belongs to the frog skin active peptide (FSAP) family. Dermaseptin subfamily. Expressed by the skin glands.

The protein resides in the secreted. In terms of biological role, potent antimicrobial peptide with activity against bacteria and protozoa. Also has activity against fungi. Probably acts by disturbing membrane functions with its amphipathic structure. The protein is Dermaseptin-S5 of Phyllomedusa sauvagei (Sauvage's leaf frog).